A 160-amino-acid chain; its full sequence is Cytochrome b6-f complex subunit 4 (160 aa).

Helical transmembrane passes span 36–56, 95–115, and 131–151; these read LLYI…GLSV, LLGV…PFIE, and TVFL…TFPI.

Belongs to the cytochrome b family. PetD subfamily. In terms of assembly, the 4 large subunits of the cytochrome b6-f complex are cytochrome b6, subunit IV (17 kDa polypeptide, petD), cytochrome f and the Rieske protein, while the 4 small subunits are petG, petL, petM and petN. The complex functions as a dimer.

The protein localises to the plastid. The protein resides in the chloroplast thylakoid membrane. Its function is as follows. Component of the cytochrome b6-f complex, which mediates electron transfer between photosystem II (PSII) and photosystem I (PSI), cyclic electron flow around PSI, and state transitions. The protein is Cytochrome b6-f complex subunit 4 of Stigeoclonium helveticum (Green alga).